We begin with the raw amino-acid sequence, 360 residues long: Putative F-box protein At5g55150 (360 aa).

The F-box domain maps to 6–54; the sequence is SSWSEFLPELLNTVFHNLNDARDILNCATVCSSWKDSSSAVYYSRTFSP.

The chain is Putative F-box protein At5g55150 from Arabidopsis thaliana (Mouse-ear cress).